Reading from the N-terminus, the 317-residue chain is Acetyl-coenzyme A carboxylase carboxyl transferase subunit alpha (317 aa).

Residues 33–294 (NLDDEIARLQ…KQRLLEDLAD (262 aa)) form the CoA carboxyltransferase C-terminal domain.

The protein belongs to the AccA family. Acetyl-CoA carboxylase is a heterohexamer composed of biotin carboxyl carrier protein (AccB), biotin carboxylase (AccC) and two subunits each of ACCase subunit alpha (AccA) and ACCase subunit beta (AccD).

The protein localises to the cytoplasm. It catalyses the reaction N(6)-carboxybiotinyl-L-lysyl-[protein] + acetyl-CoA = N(6)-biotinyl-L-lysyl-[protein] + malonyl-CoA. Its pathway is lipid metabolism; malonyl-CoA biosynthesis; malonyl-CoA from acetyl-CoA: step 1/1. Its function is as follows. Component of the acetyl coenzyme A carboxylase (ACC) complex. First, biotin carboxylase catalyzes the carboxylation of biotin on its carrier protein (BCCP) and then the CO(2) group is transferred by the carboxyltransferase to acetyl-CoA to form malonyl-CoA. The protein is Acetyl-coenzyme A carboxylase carboxyl transferase subunit alpha of Glaesserella parasuis serovar 5 (strain SH0165) (Haemophilus parasuis).